The chain runs to 276 residues: Putative ripening-related protein 5 (276 aa).

The N-terminal stretch at 1 to 18 (MAMIFLLAALSTTHLASS) is a signal peptide.

It belongs to the kiwellin family.

The protein resides in the secreted. This chain is Putative ripening-related protein 5, found in Oryza sativa subsp. japonica (Rice).